Reading from the N-terminus, the 268-residue chain is Ribosomal RNA large subunit methyltransferase E (268 aa).

Gly50, Trp52, Asp68, Asp84, and Asp109 together coordinate S-adenosyl-L-methionine. The Proton acceptor role is filled by Lys149. The TRAM domain maps to 196 to 254; it reads PLRKGDKFVVDIEKLGSSGDGAVLIEGFVVFVKEVEVGEKVRIKISDVKPNFAFADVEE.

Belongs to the class I-like SAM-binding methyltransferase superfamily. RNA methyltransferase RlmE family.

The protein resides in the cytoplasm. It catalyses the reaction uridine(2552) in 23S rRNA + S-adenosyl-L-methionine = 2'-O-methyluridine(2552) in 23S rRNA + S-adenosyl-L-homocysteine + H(+). In terms of biological role, specifically methylates the uridine in position 2552 of 23S rRNA at the 2'-O position of the ribose in the fully assembled 50S ribosomal subunit. The chain is Ribosomal RNA large subunit methyltransferase E from Methanosarcina mazei (strain ATCC BAA-159 / DSM 3647 / Goe1 / Go1 / JCM 11833 / OCM 88) (Methanosarcina frisia).